Here is a 109-residue protein sequence, read N- to C-terminus: Thiosulfate sulfurtransferase GlpE (109 aa).

The Rhodanese domain maps to 16–104 (REQGAVVVDV…WRTTFPSETA (89 aa)). The active-site Cysteine persulfide intermediate is the cysteine 64.

This sequence belongs to the GlpE family.

It localises to the cytoplasm. It carries out the reaction thiosulfate + hydrogen cyanide = thiocyanate + sulfite + 2 H(+). It catalyses the reaction thiosulfate + [thioredoxin]-dithiol = [thioredoxin]-disulfide + hydrogen sulfide + sulfite + 2 H(+). Transferase that catalyzes the transfer of sulfur from thiosulfate to thiophilic acceptors such as cyanide or dithiols. May function in a CysM-independent thiosulfate assimilation pathway by catalyzing the conversion of thiosulfate to sulfite, which can then be used for L-cysteine biosynthesis. The polypeptide is Thiosulfate sulfurtransferase GlpE (Pseudomonas fluorescens (strain Pf0-1)).